The following is a 511-amino-acid chain: Maturase K (511 aa).

The protein belongs to the intron maturase 2 family. MatK subfamily.

It localises to the plastid. The protein localises to the chloroplast. In terms of biological role, usually encoded in the trnK tRNA gene intron. Probably assists in splicing its own and other chloroplast group II introns. The sequence is that of Maturase K from Hordeum jubatum (Foxtail barley).